A 190-amino-acid chain; its full sequence is MYVWPCAVVLAQYLWFHRRSLPGKAILEIGAGVSLPGILAAKCGAEVILSDSSELPHCLEVCRQSCQMNNLPHLQVVGLTWGHISWDLLALPPQDIILASDVFFEPEDFEDILATIYFLMHKNPKVQLWSTYQVRSADWSLEALLYKWDMKCVHIPLESFDADKEDIAESTLPGRHTVEMLVISFAKDSL.

The protein belongs to the methyltransferase superfamily. METTL23 family. In terms of assembly, interacts with HSPA5, HSP90B1, TUBULIN, UGGT1 and UGGT2. Interacts with TET3. Interacts with STPG4.

It is found in the nucleus. It localises to the cytoplasm. The enzyme catalyses L-arginyl-[protein] + 2 S-adenosyl-L-methionine = N(omega),N(omega)-dimethyl-L-arginyl-[protein] + 2 S-adenosyl-L-homocysteine + 2 H(+). Functionally, histone methyltransferase that dimethylates histone H3 at 'Arg-17', forming asymmetric dimethylarginine (H3R17me2a), leading to activate transcription via chromatin remodeling. Maternal factor involved in epigenetic chromatin reprogramming of the paternal genome in the zygote: mediates H3R17me2a, promoting histone H3.3 incorporation in the male pronucleus, leading to TET3 recruitment and subsequent DNA demethylation. The sequence is that of Histone-arginine methyltransferase METTL23 from Homo sapiens (Human).